Reading from the N-terminus, the 545-residue chain is Chaperonin GroEL (545 aa).

ATP-binding positions include 30-33 (TLGP), lysine 51, 87-91 (DGTTT), glycine 415, and aspartate 495.

This sequence belongs to the chaperonin (HSP60) family. Forms a cylinder of 14 subunits composed of two heptameric rings stacked back-to-back. Interacts with the co-chaperonin GroES.

It is found in the cytoplasm. It carries out the reaction ATP + H2O + a folded polypeptide = ADP + phosphate + an unfolded polypeptide.. In terms of biological role, together with its co-chaperonin GroES, plays an essential role in assisting protein folding. The GroEL-GroES system forms a nano-cage that allows encapsulation of the non-native substrate proteins and provides a physical environment optimized to promote and accelerate protein folding. This is Chaperonin GroEL from Shewanella amazonensis (strain ATCC BAA-1098 / SB2B).